The sequence spans 72 residues: ATP synthase subunit c (72 aa).

A run of 2 helical transmembrane segments spans residues 4 to 24 and 46 to 66; these read ALGA…GMGI and LLFI…LIAF.

It belongs to the ATPase C chain family. F-type ATPases have 2 components, F(1) - the catalytic core - and F(0) - the membrane proton channel. F(1) has five subunits: alpha(3), beta(3), gamma(1), delta(1), epsilon(1). F(0) has three main subunits: a(1), b(2) and c(10-14). The alpha and beta chains form an alternating ring which encloses part of the gamma chain. F(1) is attached to F(0) by a central stalk formed by the gamma and epsilon chains, while a peripheral stalk is formed by the delta and b chains.

The protein resides in the cell membrane. Its function is as follows. F(1)F(0) ATP synthase produces ATP from ADP in the presence of a proton or sodium gradient. F-type ATPases consist of two structural domains, F(1) containing the extramembraneous catalytic core and F(0) containing the membrane proton channel, linked together by a central stalk and a peripheral stalk. During catalysis, ATP synthesis in the catalytic domain of F(1) is coupled via a rotary mechanism of the central stalk subunits to proton translocation. Functionally, key component of the F(0) channel; it plays a direct role in translocation across the membrane. A homomeric c-ring of between 10-14 subunits forms the central stalk rotor element with the F(1) delta and epsilon subunits. The chain is ATP synthase subunit c from Syntrophomonas wolfei subsp. wolfei (strain DSM 2245B / Goettingen).